A 315-amino-acid polypeptide reads, in one-letter code: uncharacterized protein (315 aa).

The span at 1–23 (MSNTDALNTANTQITENVDTSSM) shows a compositional bias: polar residues. A disordered region spans residues 1–31 (MSNTDALNTANTQITENVDTSSMKVEKTHDS).

This is an uncharacterized protein from Acanthamoeba polyphaga mimivirus (APMV).